A 66-amino-acid polypeptide reads, in one-letter code: Beta-toxin Chui4 (66 aa).

The region spanning 1 to 66 (KEGYLVELGT…VWPLKNKTCK (66 aa)) is the LCN-type CS-alpha/beta domain. 4 cysteine pairs are disulfide-bonded: Cys-12–Cys-65, Cys-16–Cys-41, Cys-25–Cys-46, and Cys-29–Cys-48.

This sequence belongs to the long (4 C-C) scorpion toxin superfamily. Sodium channel inhibitor family. Beta subfamily. Expressed by the venom gland.

The protein localises to the secreted. Its function is as follows. Beta toxins bind voltage-independently at site-4 of sodium channels (Nav) and shift the voltage of activation toward more negative potentials thereby affecting sodium channel activation and promoting spontaneous and repetitive firing. Acts on human sodium channel Nav1.6/SCN8A. Also able to weakly shift the activation curves of human Nav1.2/SCN2A and Nav1.4/SCN4A. This is Beta-toxin Chui4 from Centruroides huichol (Scorpion).